Here is a 971-residue protein sequence, read N- to C-terminus: Breast cancer type 2 susceptibility protein homolog (971 aa).

The span at 1–15 (MDQNGASGSHPNRLS) shows a compositional bias: polar residues. 4 disordered regions span residues 1-30 (MDQN…ATVS), 130-155 (SRKR…LSVQ), 349-395 (KLKL…DQPN), and 420-466 (MQCS…SSHQ). The segment covering 130 to 139 (SRKRDPKSHK) has biased composition (basic residues). Residues 349–364 (KLKLEPSSQKEQKSSK) show a composition bias toward basic and acidic residues. Polar residues-rich tracts occupy residues 375-392 (SKQS…TILD), 420-432 (MQCS…SKNA), and 453-466 (KQTP…SSHQ). BRCA2 repeat units follow at residues 570 to 604 (AEPE…EFQS), 671 to 705 (NESQ…QSKA), and 746 to 780 (SETE…EFQA). Positions 916-971 (MERFAPKPSSTSTPLADRDLNRSKDCTKNRQDAEDMSPICMQPKKSRRLGLSRSRY) are disordered. Basic and acidic residues predominate over residues 931 to 948 (ADRDLNRSKDCTKNRQDA). Basic residues predominate over residues 959-971 (KKSRRLGLSRSRY).

Interacts with Rad9. Interacts with spn-A/Rad51. Interacts with cyclin CycG.

Its subcellular location is the nucleus. Involved in and required for double-strand break repair by meiotic and mitotic homologous recombination. During meiosis, has a dual role in the repair of meiotic double-stranded breaks and the efficient activation of the meiotic recombination checkpoint. This chain is Breast cancer type 2 susceptibility protein homolog, found in Drosophila melanogaster (Fruit fly).